Here is a 223-residue protein sequence, read N- to C-terminus: UPF0758 protein FMG_0357 (223 aa).

One can recognise an MPN domain in the interval 101 to 223 (SLNDPDSVAE…SLSMRKGMYF (123 aa)). Zn(2+)-binding residues include H172, H174, and D185. The JAMM motif signature appears at 172-185 (HNHPSGSLIPSNAD).

Belongs to the UPF0758 family.

This Finegoldia magna (strain ATCC 29328 / DSM 20472 / WAL 2508) (Peptostreptococcus magnus) protein is UPF0758 protein FMG_0357.